Reading from the N-terminus, the 407-residue chain is Arylacetamide deacetylase-like 4 (407 aa).

Residues 1–4 (MAVP) are Cytoplasmic-facing. Residues 5–25 (WLVLLLALPIFFLGVFVWAVF) form a helical; Signal-anchor for type II membrane protein membrane-spanning segment. At 26–407 (EHFLTTDIPA…NAVVSYIKGI (382 aa)) the chain is on the lumenal side. The short motif at 119-121 (HGG) is the Involved in the stabilization of the negatively charged intermediate by the formation of the oxyanion hole element. The N-linked (GlcNAc...) asparagine glycan is linked to asparagine 168. Residue serine 193 is part of the active site. A glycan (N-linked (GlcNAc...) asparagine) is linked at asparagine 269. Active-site residues include aspartate 347 and histidine 377.

The protein belongs to the 'GDXG' lipolytic enzyme family.

It is found in the membrane. The chain is Arylacetamide deacetylase-like 4 (AADACL4) from Homo sapiens (Human).